Reading from the N-terminus, the 197-residue chain is uncharacterized protein (197 aa).

Residues 1–23 form the signal peptide; sequence MSARAPKELRLALPPCLLNRTFA. N-linked (GlcNAc...) asparagine glycosylation is found at asparagine 19 and asparagine 26. Residues 24–61 are Extracellular-facing; sequence SPNASGSGNTGARGPGAGGSGTCITQVGQQLFQSFSST. The chain crosses the membrane as a helical span at residues 62–82; it reads LVLIVLVTLIFCLIVLSLSTF. Over 83–197 the chain is Cytoplasmic; that stretch reads HIHKRRMKKR…EGLLQTVVLS (115 aa). Positions 94 to 180 are disordered; that stretch reads MQRAQEEYER…SSPQGAHAAS (87 aa). Basic and acidic residues-rich tracts occupy residues 96 to 107 and 125 to 136; these read RAQEEYERDHCS and HTKETRLERQPR. Residues 147–161 are compositionally biased toward low complexity; it reads SSSSSSSPGLLCQGP. The span at 162–171 shows a compositional bias: pro residues; it reads CAPPPPPPAS.

Its subcellular location is the membrane. This is an uncharacterized protein from Macaca fascicularis (Crab-eating macaque).